The following is a 264-amino-acid chain: Thiazole synthase (264 aa).

K98 acts as the Schiff-base intermediate with DXP in catalysis. Residues G159, 185 to 186 (AG), and 207 to 208 (AS) contribute to the 1-deoxy-D-xylulose 5-phosphate site.

The protein belongs to the ThiG family. As to quaternary structure, homotetramer. Forms heterodimers with either ThiH or ThiS.

Its subcellular location is the cytoplasm. It catalyses the reaction [ThiS sulfur-carrier protein]-C-terminal-Gly-aminoethanethioate + 2-iminoacetate + 1-deoxy-D-xylulose 5-phosphate = [ThiS sulfur-carrier protein]-C-terminal Gly-Gly + 2-[(2R,5Z)-2-carboxy-4-methylthiazol-5(2H)-ylidene]ethyl phosphate + 2 H2O + H(+). The protein operates within cofactor biosynthesis; thiamine diphosphate biosynthesis. Functionally, catalyzes the rearrangement of 1-deoxy-D-xylulose 5-phosphate (DXP) to produce the thiazole phosphate moiety of thiamine. Sulfur is provided by the thiocarboxylate moiety of the carrier protein ThiS. In vitro, sulfur can be provided by H(2)S. The chain is Thiazole synthase from Streptomyces griseus subsp. griseus (strain JCM 4626 / CBS 651.72 / NBRC 13350 / KCC S-0626 / ISP 5235).